Consider the following 494-residue polypeptide: Aspartyl/glutamyl-tRNA(Asn/Gln) amidotransferase subunit B (494 aa).

The protein belongs to the GatB/GatE family. GatB subfamily. As to quaternary structure, heterotrimer of A, B and C subunits.

It carries out the reaction L-glutamyl-tRNA(Gln) + L-glutamine + ATP + H2O = L-glutaminyl-tRNA(Gln) + L-glutamate + ADP + phosphate + H(+). The enzyme catalyses L-aspartyl-tRNA(Asn) + L-glutamine + ATP + H2O = L-asparaginyl-tRNA(Asn) + L-glutamate + ADP + phosphate + 2 H(+). Functionally, allows the formation of correctly charged Asn-tRNA(Asn) or Gln-tRNA(Gln) through the transamidation of misacylated Asp-tRNA(Asn) or Glu-tRNA(Gln) in organisms which lack either or both of asparaginyl-tRNA or glutaminyl-tRNA synthetases. The reaction takes place in the presence of glutamine and ATP through an activated phospho-Asp-tRNA(Asn) or phospho-Glu-tRNA(Gln). The chain is Aspartyl/glutamyl-tRNA(Asn/Gln) amidotransferase subunit B from Synechococcus elongatus (strain ATCC 33912 / PCC 7942 / FACHB-805) (Anacystis nidulans R2).